The following is a 237-amino-acid chain: Ribosomal RNA small subunit methyltransferase G (237 aa).

Residues G76, F81, I128 to E129, and R147 each bind S-adenosyl-L-methionine.

It belongs to the methyltransferase superfamily. RNA methyltransferase RsmG family.

Its subcellular location is the cytoplasm. In terms of biological role, specifically methylates the N7 position of a guanine in 16S rRNA. The protein is Ribosomal RNA small subunit methyltransferase G of Prochlorococcus marinus (strain MIT 9301).